Reading from the N-terminus, the 608-residue chain is 1-deoxy-D-xylulose-5-phosphate synthase (608 aa).

Thiamine diphosphate contacts are provided by residues His66 and Gly107–Ala109. Asp138 contacts Mg(2+). Thiamine diphosphate-binding positions include Gly139 to Ala140, Asn167, Phe277, and Glu350. Asn167 contributes to the Mg(2+) binding site.

Belongs to the transketolase family. DXPS subfamily. As to quaternary structure, homodimer. Mg(2+) is required as a cofactor. It depends on thiamine diphosphate as a cofactor.

The catalysed reaction is D-glyceraldehyde 3-phosphate + pyruvate + H(+) = 1-deoxy-D-xylulose 5-phosphate + CO2. Its pathway is metabolic intermediate biosynthesis; 1-deoxy-D-xylulose 5-phosphate biosynthesis; 1-deoxy-D-xylulose 5-phosphate from D-glyceraldehyde 3-phosphate and pyruvate: step 1/1. Catalyzes the acyloin condensation reaction between C atoms 2 and 3 of pyruvate and glyceraldehyde 3-phosphate to yield 1-deoxy-D-xylulose-5-phosphate (DXP). This Thermotoga petrophila (strain ATCC BAA-488 / DSM 13995 / JCM 10881 / RKU-1) protein is 1-deoxy-D-xylulose-5-phosphate synthase.